Consider the following 408-residue polypeptide: MTEVEEPEQPTTINEEYDLWVSNVPMMYDFVSETRLTWPSLTVQWLPTEMQPREVDGQQLLRQELLIGTLTTDNEPNYLKIAAIDLPENVTSSKPSVSDDAKENELSHRQSKIKIVRKFKHEQEVTRARYMPQSPNIIATLNGAGIVYIFDRNIKEKDHGAIASFSYHKENGYGLAFNPTVSGQLLSASDDGTVALWDVTSTANKSPSQTFDVHTDIVNDCKWHEFQSSLFGTVSEDNTLIIHDTNSDRAIQKLSVSSAFNTLAFSKRSENLLAAAGTDSNVYLYDLRRLQKPLHSMAGHEDSVTSLEFSPHQDGLLTSSGSDRRIIMWDLFNIGAEQQPDDAYDGVPELFMMHGGHRSPVNEFSHNSNVPWLMCSVEEENVLQIWKPANKIVRPPQPPADFDITTLE.

5 WD repeats span residues 120–160 (KHEQ…KDHG), 167–207 (YHKE…NKSP), 213–253 (VHTD…AIQK), 255–295 (SVSS…KPLH), and 299–339 (GHED…AEQQ). The tract at residues 341–345 (DDAYD) is interaction with the histone H4 N-terminus. The WD 6 repeat unit spans residues 356–396 (GHRSPVNEFSHNSNVPWLMCSVEEENVLQIWKPANKIVRPP).

It belongs to the WD repeat RBAP46/RBAP48/MSI1 family. As to quaternary structure, component of the HAT-B complex composed of at least HAT1 and HAT2. The HAT-B complex binds to histone H4 tail.

Its subcellular location is the cytoplasm. The protein resides in the nucleus. Functionally, regulatory subunit of the histone acetylase B (HAT-B) complex. The complex acetylates 'Lys-12' of histone H4 which is required for telomeric silencing. This Kluyveromyces lactis (strain ATCC 8585 / CBS 2359 / DSM 70799 / NBRC 1267 / NRRL Y-1140 / WM37) (Yeast) protein is Histone acetyltransferase type B subunit 2 (HAT2).